A 94-amino-acid chain; its full sequence is Elongation factor 1-beta (94 aa).

The protein belongs to the EF-1-beta/EF-1-delta family.

Promotes the exchange of GDP for GTP in EF-1-alpha/GDP, thus allowing the regeneration of EF-1-alpha/GTP that could then be used to form the ternary complex EF-1-alpha/GTP/AAtRNA. This chain is Elongation factor 1-beta, found in Ignicoccus hospitalis (strain KIN4/I / DSM 18386 / JCM 14125).